The chain runs to 185 residues: Ribosome-recycling factor (185 aa).

The protein belongs to the RRF family.

The protein localises to the cytoplasm. Functionally, responsible for the release of ribosomes from messenger RNA at the termination of protein biosynthesis. May increase the efficiency of translation by recycling ribosomes from one round of translation to another. The polypeptide is Ribosome-recycling factor (Azoarcus sp. (strain BH72)).